The sequence spans 367 residues: 3-isopropylmalate dehydrogenase (367 aa).

77–90 (GPKYDDLDFSVKPE) contacts NAD(+). The substrate site is built by arginine 97, arginine 107, arginine 135, and aspartate 224. The Mg(2+) site is built by aspartate 224, aspartate 248, and aspartate 252. 287-299 (GSAPDIAGQGKAN) serves as a coordination point for NAD(+).

It belongs to the isocitrate and isopropylmalate dehydrogenases family. LeuB type 1 subfamily. As to quaternary structure, homodimer. The cofactor is Mg(2+). Mn(2+) serves as cofactor.

The protein resides in the cytoplasm. The catalysed reaction is (2R,3S)-3-isopropylmalate + NAD(+) = 4-methyl-2-oxopentanoate + CO2 + NADH. Its pathway is amino-acid biosynthesis; L-leucine biosynthesis; L-leucine from 3-methyl-2-oxobutanoate: step 3/4. Functionally, catalyzes the oxidation of 3-carboxy-2-hydroxy-4-methylpentanoate (3-isopropylmalate) to 3-carboxy-4-methyl-2-oxopentanoate. The product decarboxylates to 4-methyl-2 oxopentanoate. The polypeptide is 3-isopropylmalate dehydrogenase (Ruegeria pomeroyi (strain ATCC 700808 / DSM 15171 / DSS-3) (Silicibacter pomeroyi)).